The chain runs to 550 residues: Membrane protein insertase YidC (550 aa).

Transmembrane regions (helical) follow at residues 6–26, 333–353, 356–376, 430–450, 469–489, and 504–524; these read LVLF…WLKQ, VVDY…LSWI, VVGN…LMFF, LPIL…LGSV, PYFI…KLNP, and PVIF…YWVV.

Belongs to the OXA1/ALB3/YidC family. Type 1 subfamily. As to quaternary structure, interacts with the Sec translocase complex via SecD. Specifically interacts with transmembrane segments of nascent integral membrane proteins during membrane integration.

The protein resides in the cell inner membrane. Functionally, required for the insertion and/or proper folding and/or complex formation of integral membrane proteins into the membrane. Involved in integration of membrane proteins that insert both dependently and independently of the Sec translocase complex, as well as at least some lipoproteins. Aids folding of multispanning membrane proteins. This chain is Membrane protein insertase YidC, found in Aromatoleum aromaticum (strain DSM 19018 / LMG 30748 / EbN1) (Azoarcus sp. (strain EbN1)).